The chain runs to 419 residues: Tyrosine--tRNA ligase (419 aa).

Y34 contacts L-tyrosine. A 'HIGH' region motif is present at residues 39–48 (PTADSLHIGN). Residues Y169 and Q173 each contribute to the L-tyrosine site. The 'KMSKS' region motif lies at 230–234 (KFGKT). K233 provides a ligand contact to ATP. Positions 352 to 419 (VPLVELLVSA…KKKYYLIRYA (68 aa)) constitute an S4 RNA-binding domain.

This sequence belongs to the class-I aminoacyl-tRNA synthetase family. TyrS type 1 subfamily. In terms of assembly, homodimer.

Its subcellular location is the cytoplasm. It carries out the reaction tRNA(Tyr) + L-tyrosine + ATP = L-tyrosyl-tRNA(Tyr) + AMP + diphosphate + H(+). Functionally, catalyzes the attachment of tyrosine to tRNA(Tyr) in a two-step reaction: tyrosine is first activated by ATP to form Tyr-AMP and then transferred to the acceptor end of tRNA(Tyr). This chain is Tyrosine--tRNA ligase, found in Geobacillus kaustophilus (strain HTA426).